We begin with the raw amino-acid sequence, 442 residues long: Protein bag of marbles (442 aa).

The interval 201-250 (FDMPVKSTMPKSLNVRYQLQVLCTKVERFLVQQRRTLEANRHFDFEKYDE) is required for interaction with ubiquitin. Residues 408–442 (VSMEQPSASEEEFEETEEVPSSPPRHTGRVPRFRS) are disordered. Acidic residues predominate over residues 416 to 425 (SEEEFEETEE). Over residues 433–442 (HTGRVPRFRS) the composition is skewed to basic residues.

As to quaternary structure, interacts (via central region) with ubiquitin. Interacts (via C-terminus) with otu (via OTU domain); the interaction enhances otu aggregation into amyloid-like structures and enhances its deubiquitinase activity. Together with otu interacts with CycA/cyclin-A (via C-terminus); the interaction stabilizes CycA by promoting and enhancing otu dependent deubiquitination of CycA. Together with otu interacts with Traf6. Part of a complex composed of at least tut, bam and bgcn; complex formation does not require RNA. Interacts (via C-terminus) with bgcn; the interaction is direct and is not disrupted by eIF4A. Interacts with eIF4A (via multiple contacts); the interaction is direct and is not disrupted by bgcn. Interacts (via N-terminus) with tut; the interaction is direct and mediates the interaction between tut and bgcn. As part of the bam-bgcn-tut complex associates with twin; may recruit the CCR4-NOT1 deadenylation complex to mRNA 3'-UTRs to mediate post-transcriptional regulation of expression. Part of a complex composed of at least mei-P26, bam, bgcn and Sxl; this complex is involved in translational repression of nanos mRNA. Post-translationally, ubiquitinated (C-terminal region). In terms of tissue distribution, in cystoblasts and/or very early cystocytes in testis (at protein level); expression levels are regulated by mei-P26. In cystoblasts and/or very early cystocytes in ovary. Expressed in the gut; expression levels increase with age.

Its subcellular location is the cytoplasm. Regulatory component of a deubiquitinase complex consisting of bam and otu. The complex deubiquitinates K63-linked polyubiquitinated proteins, antagonizing the ubiquitination activity of Traf6 and regulating the IMD immune signaling pathway. Otu-bam deubiquitinase activity is regulated by Traf6 dependent immune signaling regulation of bam expression levels; this forms a feedback loop that regulates the IMD immune signaling pathway and balances gut immune activity during aging. The complex deubiquitinates and stabilizes CycA/cyclin-A to regulate CycA-dependent differentiation. Required to initiate both male and female gametogenesis. Part of a complex with bgcn involved in 3'-UTR-dependent translational repression of a subset of mRNAs, including those for mei-P26, nanos and shg/E-cadherin. Repression of mei-P26 is targeted by let-7 miRNA. Involved in a regulatory cascade with mei-P26 to control the progression of cystocytes through transit amplification and the switch to spermatocyte differentiation; mei-P26 facilitates bam accumulation, which in turn represses translation of mei-P26. Forms a complex with tut and bgcn involved in 3'-UTR-dependent post-transcriptional repression of several 3'-RNA processing factors, which promotes germline stem cell lineage differentiation and mitosis-to-meiosis transition. The protein is Protein bag of marbles of Drosophila melanogaster (Fruit fly).